Here is a 246-residue protein sequence, read N- to C-terminus: Ubiquinone biosynthesis O-methyltransferase (246 aa).

S-adenosyl-L-methionine contacts are provided by R44, G63, D84, and M128.

The protein belongs to the methyltransferase superfamily. UbiG/COQ3 family.

It carries out the reaction a 3-demethylubiquinol + S-adenosyl-L-methionine = a ubiquinol + S-adenosyl-L-homocysteine + H(+). The enzyme catalyses a 3-(all-trans-polyprenyl)benzene-1,2-diol + S-adenosyl-L-methionine = a 2-methoxy-6-(all-trans-polyprenyl)phenol + S-adenosyl-L-homocysteine + H(+). It participates in cofactor biosynthesis; ubiquinone biosynthesis. O-methyltransferase that catalyzes the 2 O-methylation steps in the ubiquinone biosynthetic pathway. This is Ubiquinone biosynthesis O-methyltransferase from Xylella fastidiosa (strain 9a5c).